The chain runs to 358 residues: Methionine aminopeptidase 2 (358 aa).

His-109 is a substrate binding site. A divalent metal cation contacts are provided by Asp-130, Asp-141, and His-210. Substrate is bound at residue His-218. 2 residues coordinate a divalent metal cation: Glu-243 and Glu-339.

The protein belongs to the peptidase M24A family. Methionine aminopeptidase eukaryotic type 2 subfamily. It depends on Co(2+) as a cofactor. Zn(2+) is required as a cofactor. The cofactor is Mn(2+). Requires Fe(2+) as cofactor.

The protein localises to the cytoplasm. The enzyme catalyses Release of N-terminal amino acids, preferentially methionine, from peptides and arylamides.. In terms of biological role, cotranslationally removes the N-terminal methionine from nascent proteins. The N-terminal methionine is often cleaved when the second residue in the primary sequence is small and uncharged (Met-Ala-, Cys, Gly, Pro, Ser, Thr, or Val). This is Methionine aminopeptidase 2 from Encephalitozoon cuniculi (strain GB-M1) (Microsporidian parasite).